We begin with the raw amino-acid sequence, 520 residues long: MNLKQEVESRKTFAIISHPDAGKTTLTEKLLYFSGAIREAGTVKGKKTGKFATSDWMKVEQERGISVTSSVMQFDYDDYKINILDTPGHEDFSEDTYRTLMAVDSAVMVIDCAKGIEPQTLKLFKVCKMRGIPIFTFINKLDRVGKEPFELLDEIEETLNIETYPMNWPIGMGQSFFGIIDRKSKTIEPFRDEENILHLNDDFELEEDHAITNDSAFEQAIEELMLVEEAGEAFDNDALLSGDLTPVFFGSALANFGVQNFLNAYVDFAPMPNARQTKEEVEVSPFDDSFSGFIFKIQANMDPKHRDRIAFMRVVSGAFERGMDVTLQRTNKKQKITRSTSFMADDKETVNHAVAGDIIGLYDTGNYQIGDTLVGGKQTYSFQDLPQFTPEIFMKVSAKNVMKQKHFHKGIEQLVQEGAIQYYKTLHTNQIILGAVGQLQFEVFEHRMKNEYNVDVVMEPVGRKIARWIENEDQITDKMNTSRSILVKDRYDDLVFLFENEFATRWFEEKFPEIKLYSLL.

One can recognise a tr-type G domain in the interval 8-277 (ESRKTFAIIS…FAPMPNARQT (270 aa)). GTP contacts are provided by residues 17-24 (SHPDAGKT), 85-89 (DTPGH), and 139-142 (NKLD).

This sequence belongs to the TRAFAC class translation factor GTPase superfamily. Classic translation factor GTPase family. PrfC subfamily.

The protein resides in the cytoplasm. Functionally, increases the formation of ribosomal termination complexes and stimulates activities of RF-1 and RF-2. It binds guanine nucleotides and has strong preference for UGA stop codons. It may interact directly with the ribosome. The stimulation of RF-1 and RF-2 is significantly reduced by GTP and GDP, but not by GMP. In Staphylococcus aureus (strain MRSA252), this protein is Peptide chain release factor 3.